We begin with the raw amino-acid sequence, 1080 residues long: Histone deacetylase 4 (1080 aa).

Disordered regions lie at residues 1–25 (MSSQ…PPRV), 132–165 (KLEQ…ESAV), and 205–312 (TQHS…ISAE). Over residues 132-162 (KLEQHRQEQELEKQHREQKLQQLKNKEKGKE) the composition is skewed to basic and acidic residues. Residues 205–224 (TQHSSLDQSSPPQSGVSGTY) show a composition bias toward polar residues. Basic and acidic residues-rich tracts occupy residues 233–244 (DSKDDFPLRKTA) and 258–273 (KVAE…RKDG). Positions 289 to 312 (SACNSAPGSGPSSPNNSSNNISAE) are enriched in low complexity. The PxLPxI/L motif lies at 348 to 353 (PSLPNI). Disordered stretches follow at residues 506–527 (KPNE…ELRE), 558–579 (EPIE…GQRQ), and 622–646 (PLSR…PTKP). Over residues 509-527 (EPARQHESHPEETEEELRE) the composition is skewed to basic and acidic residues. Over residues 560-571 (IESDEEEAEPQQ) the composition is skewed to acidic residues. The segment covering 625-637 (RAQSSPASATFPM) has biased composition (polar residues). Residues 651–1080 (GLVYDTLMLK…DEPMEEEPPL (430 aa)) are histone deacetylase. Zn(2+)-binding residues include cysteine 663, cysteine 665, histidine 671, and cysteine 747. Residue histidine 799 is part of the active site. The tract at residues 1055-1080 (MASLSVGVKPAEKRPDDEPMEEEPPL) is disordered.

It belongs to the histone deacetylase family. HD type 2 subfamily.

The protein resides in the nucleus. The catalysed reaction is N(6)-acetyl-L-lysyl-[histone] + H2O = L-lysyl-[histone] + acetate. Responsible for the deacetylation of lysine residues on the N-terminal part of the core histones (H2A, H2B, H3 and H4). Histone deacetylation gives a tag for epigenetic repression and plays an important role in transcriptional regulation, cell cycle progression and developmental events. Histone deacetylases act via the formation of large multiprotein complexes. This chain is Histone deacetylase 4 (HDAC4), found in Gallus gallus (Chicken).